The primary structure comprises 93 residues: Small ribosomal subunit protein uS19 (93 aa).

Belongs to the universal ribosomal protein uS19 family.

In terms of biological role, protein S19 forms a complex with S13 that binds strongly to the 16S ribosomal RNA. The sequence is that of Small ribosomal subunit protein uS19 from Pseudarthrobacter chlorophenolicus (strain ATCC 700700 / DSM 12829 / CIP 107037 / JCM 12360 / KCTC 9906 / NCIMB 13794 / A6) (Arthrobacter chlorophenolicus).